The primary structure comprises 43 residues: Potassium channel toxin gamma-KTx 3.2 (43 aa).

4 disulfide bridges follow: C5–C23, C11–C34, C20–C39, and C24–C41.

The protein belongs to the ergtoxin family. Gamma-KTx 3 subfamily. Expressed by the venom gland.

The protein resides in the secreted. In terms of biological role, blocks Kv11/ERG potassium channels. This chain is Potassium channel toxin gamma-KTx 3.2, found in Centruroides elegans (Bark scorpion).